Reading from the N-terminus, the 110-residue chain is Cytochrome c oxidase subunit 4B (110 aa).

3 consecutive transmembrane segments (helical) span residues 29–49, 55–75, and 89–109; these read MIAF…VGYE, FVVP…LYYF, and FIYG…TVVW.

Belongs to the cytochrome c oxidase bacterial subunit 4 family.

The protein resides in the cell membrane. It carries out the reaction 4 Fe(II)-[cytochrome c] + O2 + 8 H(+)(in) = 4 Fe(III)-[cytochrome c] + 2 H2O + 4 H(+)(out). The protein is Cytochrome c oxidase subunit 4B (caaD) of Bacillus sp. (strain PS3).